The primary structure comprises 1091 residues: Sodium/potassium exporting P-type ATPase 1 (1091 aa).

Over 1-63 the chain is Cytoplasmic; the sequence is MGEGTTKENN…LGDDTKIDYK (63 aa). The helical transmembrane segment at 64–84 threads the bilayer; that stretch reads AMVLHQVCNAMIMVLLISMII. The Extracellular segment spans residues 85-90; that stretch reads SFAMHD. Residues 91–111 form a helical membrane-spanning segment; sequence WITGGVISFVIAVNVLIGLVQ. The Cytoplasmic segment spans residues 112-282; sequence EYKATKTMNS…TNVGTPLHRK (171 aa). The helical transmembrane segment at 283-303 threads the bilayer; sequence LSKLAVLLFWIAVLFAIIVMA. Over 304–312 the chain is Extracellular; it reads SQKFDVDKR. Residues 313 to 333 traverse the membrane as a helical segment; it reads VAIYAICVALSMIPSSLVVVL. The Cytoplasmic portion of the chain corresponds to 334-815; sequence TITMSVGAAV…RRMTDNIQKF (482 aa). Residue Asp-369 is the 4-aspartylphosphate intermediate of the active site. Mg(2+) is bound by residues Asp-369 and Thr-371. Residues Thr-371 and Glu-483 each contribute to the ATP site. The segment at 499–525 is disordered; that stretch reads ALTGEKSTNQSNENDQSSLSQHNEKPG. Residues 503 to 519 are compositionally biased toward polar residues; that stretch reads EKSTNQSNENDQSSLSQ. Lys-561, Arg-606, Thr-673, Gly-674, Asp-675, Arg-732, and Lys-738 together coordinate ATP. Asp-757 provides a ligand contact to Mg(2+). Asn-760 contributes to the ATP binding site. Residues 816–836 traverse the membrane as a helical segment; the sequence is VLQLLAENVAQALYLIIGLVF. The Extracellular portion of the chain corresponds to 837-848; sequence RDENGKSVFPLS. A helical transmembrane segment spans residues 849–869; that stretch reads PVEVLWIIVVTSCFPAMGLGL. Topologically, residues 870–885 are cytoplasmic; the sequence is EKAAPDLMDRPPHDSE. Residues 886–906 traverse the membrane as a helical segment; it reads VGIFTWEVIIDTFAYGIIMTG. The Extracellular segment spans residues 907–943; sequence SCMASFTGSLYGINSGRLGHDCDGTYNSSCRDVYRSR. A helical transmembrane segment spans residues 944-964; it reads SAAFATMTWCALILAWEVVDM. The Cytoplasmic portion of the chain corresponds to 965-991; that stretch reads RRSFFRMHPDTDSPVKEFFRSIWGNQF. Residues 992-1012 traverse the membrane as a helical segment; sequence LFWSIIFGFVSAFPVVYIPVI. Residues 1013–1021 are Extracellular-facing; the sequence is NDKVFLHKP. A helical membrane pass occupies residues 1022–1042; sequence IGAEWGLAIAFTIAFWIGAEL. Residues 1043-1091 lie on the Cytoplasmic side of the membrane; it reads YKCGKRRYFKTQRAHNPENDLESNNKRDPFEAYSTSTTIHTEVNIGIKQ.

Belongs to the cation transport ATPase (P-type) (TC 3.A.3) family. Type IID subfamily. Requires Mg(2+) as cofactor. Post-translationally, the active site is phosphorylated in presence of sodium or potassium and in conditions of higher pH. Not phosphorylated in presence of calcium ions.

It localises to the cell membrane. It carries out the reaction Na(+)(in) + ATP + H2O = Na(+)(out) + ADP + phosphate + H(+). It catalyses the reaction K(+)(in) + ATP + H2O = K(+)(out) + ADP + phosphate + H(+). Functionally, catalyzes the hydrolysis of ATP coupled with the export of sodium and potassium from the cell. May export potassium less efficiently. May transport other cations such as lithium. Sodium/potassium efflux ATPases are involved in salt tolerance and maintaining the membrane potential across the plasma membrane in high salinity (Na+) or alkaline (K+) environments. Is negatively modulated by SIS2/HAL3. In Saccharomyces cerevisiae (strain ATCC 204508 / S288c) (Baker's yeast), this protein is Sodium/potassium exporting P-type ATPase 1.